Consider the following 213-residue polypeptide: Holliday junction branch migration complex subunit RuvA (213 aa).

The tract at residues 1-64 (MIARLVGFLV…EDSITLFGFA (64 aa)) is domain I. Residues 65–143 (SYLERDWFRL…AIALFSSAKG (79 aa)) are domain II. Positions 144 to 159 (DHLAVEDISQPAASAH) are flexible linker. Positions 160–213 (HAGNFMADAVSALLNLGFKPAEAQRVVQLASEELGDQATLDSLVRLALRLSSKH) are domain III.

The protein belongs to the RuvA family. Homotetramer. Forms an RuvA(8)-RuvB(12)-Holliday junction (HJ) complex. HJ DNA is sandwiched between 2 RuvA tetramers; dsDNA enters through RuvA and exits via RuvB. An RuvB hexamer assembles on each DNA strand where it exits the tetramer. Each RuvB hexamer is contacted by two RuvA subunits (via domain III) on 2 adjacent RuvB subunits; this complex drives branch migration. In the full resolvosome a probable DNA-RuvA(4)-RuvB(12)-RuvC(2) complex forms which resolves the HJ.

The protein resides in the cytoplasm. Its function is as follows. The RuvA-RuvB-RuvC complex processes Holliday junction (HJ) DNA during genetic recombination and DNA repair, while the RuvA-RuvB complex plays an important role in the rescue of blocked DNA replication forks via replication fork reversal (RFR). RuvA specifically binds to HJ cruciform DNA, conferring on it an open structure. The RuvB hexamer acts as an ATP-dependent pump, pulling dsDNA into and through the RuvAB complex. HJ branch migration allows RuvC to scan DNA until it finds its consensus sequence, where it cleaves and resolves the cruciform DNA. The sequence is that of Holliday junction branch migration complex subunit RuvA from Zymomonas mobilis subsp. mobilis (strain ATCC 31821 / ZM4 / CP4).